Reading from the N-terminus, the 162-residue chain is Caveolin-2 (162 aa).

Residues 1–86 (MGLETEKADV…FEISKYVMYK (86 aa)) are Cytoplasmic-facing. A Phosphotyrosine; by SRC modification is found at tyrosine 19. 2 positions are modified to phosphoserine: serine 20 and serine 23. Tyrosine 27 is modified (phosphotyrosine; by SRC). Residue serine 36 is modified to Phosphoserine. Positions 87-107 (FLTVFLAIPLAFIAGILFATL) form an intramembrane region, helical. Residues 108 to 162 (SCLHIWILMPFVKTCLMVLPSVQTIWKSVTDVFIAPLCTSVGRSFSSVSLQLSQD) lie on the Cytoplasmic side of the membrane.

Belongs to the caveolin family. As to quaternary structure, monomer or homodimer. Interacts with CAV1; the interaction forms a stable heterooligomeric complex that is required for targeting to lipid rafts and for caveolae formation. Tyrosine phosphorylated forms do not form heterooligomers with the Tyr-19-phosphorylated form existing as a monomer or dimer, and the Tyr-27-form as a monomer only. Interacts (tyrosine phosphorylated form) with the SH2 domain-containing proteins, RASA1, NCK1 and SRC. Interacts (tyrosine phosphorylated form) with INSR, the interaction (Tyr-27-phosphorylated form) is increased on insulin stimulation. Interacts (Tyr-19 phosphorylated form) with MAPK1 (phosphorylated form); the interaction, promoted by insulin, leads to nuclear location and MAPK1 activation. Interacts with STAT3; the interaction is increased on insulin-induced tyrosine phosphorylation leading to STAT activation. Phosphorylated on serine and tyrosine residues. CAV1 promotes phosphorylation on Ser-23 which then targets the complex to the plasma membrane, lipid rafts and caveolae. Phosphorylation on Ser-36 appears to modulate mitosis in endothelial cells. Phosphorylation on both Tyr-19 and Tyr-27 is required for insulin-induced 'Ser-727' phosphorylation of STAT3 and its activation. Phosphorylation on Tyr-19 is required for insulin-induced phosphorylation of MAPK1 and DNA binding of STAT3. Tyrosine phosphorylation is induced by both EGF and insulin (By. similarity).

It is found in the nucleus. The protein localises to the cytoplasm. It localises to the golgi apparatus membrane. The protein resides in the cell membrane. Its subcellular location is the membrane. It is found in the caveola. Its function is as follows. May act as a scaffolding protein within caveolar membranes. Interacts directly with G-protein alpha subunits and can functionally regulate their activity. Acts as an accessory protein in conjunction with CAV1 in targeting to lipid rafts and driving caveolae formation. The Ser-36 phosphorylated form has a role in modulating mitosis in endothelial cells. Positive regulator of cellular mitogenesis of the MAPK signaling pathway. Required for the insulin-stimulated nuclear translocation and activation of MAPK1 and STAT3, and the subsequent regulation of cell cycle progression. In Chlorocebus aethiops (Green monkey), this protein is Caveolin-2 (CAV2).